We begin with the raw amino-acid sequence, 321 residues long: D-alanine--D-alanine ligase (321 aa).

The region spanning Arg121–Lys315 is the ATP-grasp domain. Pro147 to Gln199 is a binding site for ATP. The Mg(2+) site is built by Glu268, Glu282, and Asn284.

This sequence belongs to the D-alanine--D-alanine ligase family. Mg(2+) serves as cofactor. The cofactor is Mn(2+).

It is found in the cytoplasm. It carries out the reaction 2 D-alanine + ATP = D-alanyl-D-alanine + ADP + phosphate + H(+). It participates in cell wall biogenesis; peptidoglycan biosynthesis. Functionally, cell wall formation. The protein is D-alanine--D-alanine ligase of Rickettsia africae (strain ESF-5).